A 208-amino-acid chain; its full sequence is Ribosomal RNA small subunit methyltransferase G (208 aa).

Residues Gly78, Phe83, 101 to 103 (ERS), 129 to 130 (IE), and Arg142 contribute to the S-adenosyl-L-methionine site.

It belongs to the methyltransferase superfamily. RNA methyltransferase RsmG family.

The protein localises to the cytoplasm. Its function is as follows. Specifically methylates the N7 position of a guanine in 16S rRNA. The protein is Ribosomal RNA small subunit methyltransferase G of Borrelia garinii subsp. bavariensis (strain ATCC BAA-2496 / DSM 23469 / PBi) (Borreliella bavariensis).